The sequence spans 469 residues: MNPNQKIITIGSVSLTIATVCFLMQIAILVTTVTLHFKQYECDSPASNQVMPCEPIIIERNITEIVYLNNTTIEKEICPKVVEYRNWSKPQCQITGFAPFSKDNSIRLSAGGDIWVTREPYVSCDHGKCYQFALGQGTTLDNKHSNDTIHDRIPHRTLLMNELGVPFHLGTRQVCIAWSSSSCHDGKAWLHVCITGDDKNATASFIYDGRLVDSIGSWSQNILRTQESECVCINGTCTVVMTDGSASGRADTRILFIEEGKIVHISPLSGSAQHVEECSCYPRYPGVRCICRDNWKGSNRPVVDINMEDYSIDSSYVCSGLVGDTPRNDDRSSNSNCRNPNNERGNQGVKGWAFDNGDDVWMGRTISKDLRSGYETFKVIGGWSTPNSKSQINRQVIVDSDNRSGYSGIFSVEGKSCINRCFYVELIRGRKQETRVWWTSNSIVVFCGTSGTYGTGSWPDGANINFMPI.

Over 1 to 9 the chain is Intravirion; sequence MNPNQKIIT. Residues 10–30 traverse the membrane as a helical segment; the sequence is IGSVSLTIATVCFLMQIAILV. Residues 11–33 are involved in apical transport and lipid raft association; that stretch reads GSVSLTIATVCFLMQIAILVTTV. Residues 31–469 are Virion surface-facing; sequence TTVTLHFKQY…DGANINFMPI (439 aa). Residues 36 to 88 are hypervariable stalk region; that stretch reads HFKQYECDSPASNQVMPCEPIIIERNITEIVYLNNTTIEKEICPKVVEYRNWS. Residues Asn61, Asn69, Asn70, and Asn86 are each glycosylated (N-linked (GlcNAc...) asparagine; by host). Residues 91–469 are head of neuraminidase; sequence QCQITGFAPF…DGANINFMPI (379 aa). 8 disulfides stabilise this stretch: Cys92-Cys417, Cys124-Cys129, Cys183-Cys230, Cys232-Cys237, Cys278-Cys291, Cys280-Cys289, Cys318-Cys337, and Cys421-Cys447. Arg118 contributes to the substrate binding site. N-linked (GlcNAc...) asparagine; by host glycosylation occurs at Asn146. The Proton donor/acceptor role is filled by Asp151. Substrate is bound at residue Arg152. 2 N-linked (GlcNAc...) asparagine; by host glycosylation sites follow: Asn200 and Asn234. 276–277 lines the substrate pocket; that stretch reads EE. Arg292 contacts substrate. Positions 293, 297, and 324 each coordinate Ca(2+). The tract at residues 324–350 is disordered; sequence DTPRNDDRSSNSNCRNPNNERGNQGVK. A compositionally biased stretch (low complexity) spans 333–342; that stretch reads SNSNCRNPNN. Arg371 contacts substrate. Residue Asn402 is glycosylated (N-linked (GlcNAc...) asparagine; by host). The active-site Nucleophile is Tyr406.

Belongs to the glycosyl hydrolase 34 family. As to quaternary structure, homotetramer. It depends on Ca(2+) as a cofactor. N-glycosylated.

It is found in the virion membrane. The protein localises to the host apical cell membrane. The enzyme catalyses Hydrolysis of alpha-(2-&gt;3)-, alpha-(2-&gt;6)-, alpha-(2-&gt;8)- glycosidic linkages of terminal sialic acid residues in oligosaccharides, glycoproteins, glycolipids, colominic acid and synthetic substrates.. Inhibited by the neuraminidase inhibitors zanamivir (Relenza) and oseltamivir (Tamiflu). These drugs interfere with the release of progeny virus from infected cells and are effective against all influenza strains. Resistance to neuraminidase inhibitors is quite rare. Functionally, catalyzes the removal of terminal sialic acid residues from viral and cellular glycoconjugates. Cleaves off the terminal sialic acids on the glycosylated HA during virus budding to facilitate virus release. Additionally helps virus spread through the circulation by further removing sialic acids from the cell surface. These cleavages prevent self-aggregation and ensure the efficient spread of the progeny virus from cell to cell. Otherwise, infection would be limited to one round of replication. Described as a receptor-destroying enzyme because it cleaves a terminal sialic acid from the cellular receptors. May facilitate viral invasion of the upper airways by cleaving the sialic acid moieties on the mucin of the airway epithelial cells. Likely to plays a role in the budding process through its association with lipid rafts during intracellular transport. May additionally display a raft-association independent effect on budding. Plays a role in the determination of host range restriction on replication and virulence. Sialidase activity in late endosome/lysosome traffic seems to enhance virus replication. This Aves (whales) protein is Neuraminidase.